The primary structure comprises 197 residues: Cytochrome c-L (197 aa).

Residues 1–25 (MMNRVKIGTALLGLTLAGIALPALA) form the signal peptide. Heme c contacts are provided by cysteine 90, cysteine 93, and histidine 94.

In terms of processing, binds 1 heme c group covalently per subunit.

The protein localises to the periplasm. In terms of biological role, electron acceptor for MDH. Acts in methanol oxidation. The polypeptide is Cytochrome c-L (moxG) (Methylorubrum extorquens (strain ATCC 14718 / DSM 1338 / JCM 2805 / NCIMB 9133 / AM1) (Methylobacterium extorquens)).